A 56-amino-acid polypeptide reads, in one-letter code: Large ribosomal subunit protein bL33 (56 aa).

It belongs to the bacterial ribosomal protein bL33 family.

The polypeptide is Large ribosomal subunit protein bL33 (Ehrlichia ruminantium (strain Gardel)).